The sequence spans 490 residues: Adenylyltransferase and sulfurtransferase uba4 (490 aa).

Positions Glu33–Thr54 are disordered. Residues Gly96, Asp117, Ser124–Arg128, Lys141, and Asp185–His186 each bind ATP. The Zn(2+) site is built by Cys234 and Cys237. Cys251 functions as the Glycyl thioester intermediate; for adenylyltransferase activity in the catalytic mechanism. The Zn(2+) site is built by Cys323 and Cys326. The Rhodanese domain occupies Glu379–Pro488. The active-site Cysteine persulfide intermediate; for sulfurtransferase activity is the Cys443.

It in the N-terminal section; belongs to the HesA/MoeB/ThiF family. UBA4 subfamily. Requires Zn(2+) as cofactor.

It localises to the cytoplasm. Its subcellular location is the cytosol. The catalysed reaction is [molybdopterin-synthase sulfur-carrier protein]-C-terminal Gly-Gly + ATP + H(+) = [molybdopterin-synthase sulfur-carrier protein]-C-terminal Gly-Gly-AMP + diphosphate. The enzyme catalyses [molybdopterin-synthase sulfur-carrier protein]-C-terminal Gly-Gly-AMP + S-sulfanyl-L-cysteinyl-[cysteine desulfurase] + AH2 = [molybdopterin-synthase sulfur-carrier protein]-C-terminal-Gly-aminoethanethioate + L-cysteinyl-[cysteine desulfurase] + A + AMP + 2 H(+). Its pathway is tRNA modification; 5-methoxycarbonylmethyl-2-thiouridine-tRNA biosynthesis. Functionally, plays a central role in 2-thiolation of mcm(5)S(2)U at tRNA wobble positions of cytosolic tRNA(Lys), tRNA(Glu) and tRNA(Gln). Also essential during biosynthesis of the molybdenum cofactor. Acts by mediating the C-terminal thiocarboxylation of sulfur carriers URM1 and MOCS2A. Its N-terminus first activates urm1 and MOCS2A as acyl-adenylates (-COAMP), then the persulfide sulfur on the catalytic cysteine is transferred to URM1 and MOCS2A to form thiocarboxylation (-COSH) of their C-terminus. The reaction probably involves hydrogen sulfide that is generated from the persulfide intermediate and that acts as a nucleophile towards URM1 and MOCS2A. Subsequently, a transient disulfide bond is formed. Does not use thiosulfate as sulfur donor; NFS1 probably acting as a sulfur donor for thiocarboxylation reactions. The polypeptide is Adenylyltransferase and sulfurtransferase uba4 (Pyricularia oryzae (strain 70-15 / ATCC MYA-4617 / FGSC 8958) (Rice blast fungus)).